The primary structure comprises 483 residues: Endoplasmic reticulum lectin 1 (483 aa).

Positions 1–33 are cleaved as a signal peptide; the sequence is MEEGGGGVRSLVPGGPVLLVLCGLLEASGGGRA. MRH domains are found at residues 111-246 and 342-469; these read SSCS…LCSH and SYCF…ICKI. An intrachain disulfide couples Cys-113 to Cys-126. An N-linked (GlcNAc...) asparagine glycan is attached at Asn-195. 5 disulfide bridges follow: Cys-199–Cys-232, Cys-215–Cys-244, Cys-344–Cys-357, Cys-421–Cys-455, and Cys-436–Cys-467.

In terms of assembly, may form a complex with OS9, HSPA5, SYVN1, and SEL1L with which it interacts directly. Interacts (via PRKCSH 2 domain) with KREMEN2 (when glycosylated). Interacts with HSPA5. In terms of processing, isoform 1 and isoform 2 are N-glycosylated.

It localises to the endoplasmic reticulum lumen. Its function is as follows. Probable lectin that binds selectively to improperly folded lumenal proteins. May function in endoplasmic reticulum quality control and endoplasmic reticulum-associated degradation (ERAD) of both non-glycosylated proteins and glycoproteins. This is Endoplasmic reticulum lectin 1 (ERLEC1) from Homo sapiens (Human).